The primary structure comprises 89 residues: Small ribosomal subunit protein uS15 (89 aa).

It belongs to the universal ribosomal protein uS15 family. Part of the 30S ribosomal subunit. Forms a bridge to the 50S subunit in the 70S ribosome, contacting the 23S rRNA.

Functionally, one of the primary rRNA binding proteins, it binds directly to 16S rRNA where it helps nucleate assembly of the platform of the 30S subunit by binding and bridging several RNA helices of the 16S rRNA. Its function is as follows. Forms an intersubunit bridge (bridge B4) with the 23S rRNA of the 50S subunit in the ribosome. The chain is Small ribosomal subunit protein uS15 from Chlorobium luteolum (strain DSM 273 / BCRC 81028 / 2530) (Pelodictyon luteolum).